Consider the following 551-residue polypeptide: MSSQVLASSQLSDKIIARPTTNFHPSIWGDRFLHYNVSEQDLVCKQERIEELIQVVKKEILSSNHDQLKLIDNLQRLGLSHHFESEIEKLLEQLSIGTHHQNHQDLHDASLWFRLLRQHGLNVSSSIFEKFKDDEGNFKKSLITDVSGLLSLYEASHLSYVGESILDEALAFTTTHLKSIVANSKNHPLSHQISKALERPLRMTLERLHARFYISIYEKDASHNKVLLELAKLDFNLLQCFHKKELSEIVRWWKEHEFAKKFPFARDRMVELYFWILGVYYEPKYSRARKLLTKVIALTSITDDIYDAYGTIDELQLLTKAMQRWDINCMDKLEPEYLKTYYKVMLESYEEFEKELKKEELYKLEYAKEEMKRIIRAYFEEARWLNEGYLPSFDEHLRVSYISSGYVLLIATSYVGMDDIVTHETLNWLSKDPKIVSASTLLSRFMDDIGSRKFEQERNHVLSTVECYMKQYEVSEEEAVKELNKRVANCWKEINEDFIRPTSVPFPILFRIINLTKTADFMYREGGDQYTHVGKMLKDSIAALLIDPIPL.

(2E,6E)-farnesyl diphosphate contacts are provided by arginine 266, aspartate 303, aspartate 307, arginine 444, and aspartate 447. Mg(2+)-binding residues include aspartate 303 and aspartate 307. Positions 303 to 307 (DDIYD) match the DDXXD motif motif. Aspartate 447, serine 451, and glutamate 455 together coordinate Mg(2+).

This sequence belongs to the terpene synthase family. Tpsb subfamily. Mg(2+) is required as a cofactor. Requires Mn(2+) as cofactor.

It carries out the reaction (2E,6E)-farnesyl diphosphate = delta-selinene + diphosphate. It catalyses the reaction (2E)-geranyl diphosphate = beta-myrcene + diphosphate. The catalysed reaction is (2E)-geranyl diphosphate = (4S)-limonene + diphosphate. The enzyme catalyses (2E,6E)-farnesyl diphosphate + H2O = selina-6-en-4-ol + diphosphate. It functions in the pathway secondary metabolite biosynthesis; terpenoid biosynthesis. Functionally, involved in sesquiterpene olefins biosynthesis, constituants of cannabinoids and terpenoids-rich resins. Catalyzes mainly the conversion of (2E)-farnesyl diphosphate to delta-selinene, and also produces minor products such as selina-6-en-4-ol. Can also use (2E)-geranyl diphosphate as substrate with low efficiency, producing minor amounts of myrcene and limonene. This is Delta-selinene synthase TPS7FN from Cannabis sativa (Hemp).